Consider the following 77-residue polypeptide: Defensin-like protein 159 (77 aa).

A signal peptide spans Met1–Gly27. 4 cysteine pairs are disulfide-bonded: Cys30/Cys77, Cys40/Cys59, Cys45/Cys71, and Cys49/Cys73.

Belongs to the DEFL family.

The protein localises to the secreted. This chain is Defensin-like protein 159 (LCR25), found in Arabidopsis thaliana (Mouse-ear cress).